Here is a 476-residue protein sequence, read N- to C-terminus: Adenosylhomocysteinase (476 aa).

Substrate contacts are provided by threonine 67, aspartate 142, and glutamate 202. Residue 203-205 participates in NAD(+) binding; that stretch reads TTT. Substrate contacts are provided by lysine 232 and aspartate 236. NAD(+) is bound by residues asparagine 237, 266-271, glutamate 289, asparagine 324, 345-347, and asparagine 390; these read GYGDVG and IGH.

The protein belongs to the adenosylhomocysteinase family. Requires NAD(+) as cofactor.

Its subcellular location is the cytoplasm. It catalyses the reaction S-adenosyl-L-homocysteine + H2O = L-homocysteine + adenosine. The protein operates within amino-acid biosynthesis; L-homocysteine biosynthesis; L-homocysteine from S-adenosyl-L-homocysteine: step 1/1. Functionally, may play a key role in the regulation of the intracellular concentration of adenosylhomocysteine. In Prochlorococcus marinus (strain MIT 9303), this protein is Adenosylhomocysteinase.